Consider the following 203-residue polypeptide: 2-hydroxychromene-2-carboxylate isomerase (203 aa).

S11 (nucleophile) is an active-site residue. S11 is a glutathione binding site. Substrate is bound by residues K43, 53 to 54 (NR), and Y84. Glutathione is bound by residues V168 and 179–182 (WGND).

It belongs to the GST superfamily. NadH family. It depends on glutathione as a cofactor.

It catalyses the reaction 2-hydroxychromene-2-carboxylate = (3E)-4-(2-hydroxyphenyl)-2-oxobut-3-enoate. It participates in aromatic compound metabolism; naphthalene degradation. Involved in the naphthalene catabolic pathway. Catalyzes the reversible glutathione-dependent isomerization of 2-hydroxychromene-2-carboxylate (HCCA) to trans-O-hydroxybenzylidenepyruvate (THBPA). This is 2-hydroxychromene-2-carboxylate isomerase (nahD) from Pseudomonas putida (Arthrobacter siderocapsulatus).